The following is a 230-amino-acid chain: N-(5'-phosphoribosyl)anthranilate isomerase (230 aa).

The protein belongs to the TrpF family.

It carries out the reaction N-(5-phospho-beta-D-ribosyl)anthranilate = 1-(2-carboxyphenylamino)-1-deoxy-D-ribulose 5-phosphate. It participates in amino-acid biosynthesis; L-tryptophan biosynthesis; L-tryptophan from chorismate: step 3/5. The sequence is that of N-(5'-phosphoribosyl)anthranilate isomerase from Thermosynechococcus vestitus (strain NIES-2133 / IAM M-273 / BP-1).